The following is a 274-amino-acid chain: NH(3)-dependent NAD(+) synthetase (274 aa).

46 to 53 (GISGGQDS) lines the ATP pocket. Asp52 contributes to the Mg(2+) binding site. Arg140 lines the deamido-NAD(+) pocket. ATP is bound at residue Thr160. Position 165 (Glu165) interacts with Mg(2+). Positions 173 and 180 each coordinate deamido-NAD(+). ATP contacts are provided by Lys189 and Thr211. Deamido-NAD(+) is bound at residue 260–261 (HK).

The protein belongs to the NAD synthetase family. As to quaternary structure, homodimer.

It carries out the reaction deamido-NAD(+) + NH4(+) + ATP = AMP + diphosphate + NAD(+) + H(+). It participates in cofactor biosynthesis; NAD(+) biosynthesis; NAD(+) from deamido-NAD(+) (ammonia route): step 1/1. Catalyzes the ATP-dependent amidation of deamido-NAD to form NAD. Uses ammonia as a nitrogen source. The sequence is that of NH(3)-dependent NAD(+) synthetase from Pectobacterium carotovorum subsp. carotovorum (strain PC1).